Here is a 312-residue protein sequence, read N- to C-terminus: Methionyl-tRNA formyltransferase (312 aa).

109–112 (SLLP) serves as a coordination point for (6S)-5,6,7,8-tetrahydrofolate.

It belongs to the Fmt family.

It catalyses the reaction L-methionyl-tRNA(fMet) + (6R)-10-formyltetrahydrofolate = N-formyl-L-methionyl-tRNA(fMet) + (6S)-5,6,7,8-tetrahydrofolate + H(+). In terms of biological role, attaches a formyl group to the free amino group of methionyl-tRNA(fMet). The formyl group appears to play a dual role in the initiator identity of N-formylmethionyl-tRNA by promoting its recognition by IF2 and preventing the misappropriation of this tRNA by the elongation apparatus. The protein is Methionyl-tRNA formyltransferase of Geotalea daltonii (strain DSM 22248 / JCM 15807 / FRC-32) (Geobacter daltonii).